Consider the following 381-residue polypeptide: MKAPIEVSPLAWLDAVEQQRRAAGLRRSLRPRPPVATELDLASNDYLGLSQHPDVIDGGVAALRMWGAGATGSRLVTGDTELHQQFESELADYVGAASGLLFSSGYAANLGAVVGLSGRGALVVSDAYSHASLVDACRLSRARVVVTPHRDVDAVRAALQDRDEERAVVITESVFSTDGALAPLRELHEVCRRHRALLIVDEAHGLGVRGGGRGLVFEAGLAGAPDVVMTTTLSKALGSQGGAVLGPAAVRAHLIDAARTFIFDTGLAPAAVGAARAALGVLRAEPWRSGAVLRHAGVLAEVCRVREAPQSAVVSVILGDPDVAVAAATACLDGGVRVGCFRPPTVPAGTSRLRLTARASLDDAELEVARRVLTDVLAGLG.

Arg27 is a binding site for substrate. Gly105–Tyr106 provides a ligand contact to pyridoxal 5'-phosphate. His130 is a substrate binding site. Pyridoxal 5'-phosphate contacts are provided by residues Ser176, Asp201–His204, and Thr232–Lys235. N6-(pyridoxal phosphate)lysine is present on Lys235. Residue Thr345 participates in substrate binding.

It belongs to the class-II pyridoxal-phosphate-dependent aminotransferase family. BioF subfamily. As to quaternary structure, homodimer. Pyridoxal 5'-phosphate serves as cofactor.

The catalysed reaction is 6-carboxyhexanoyl-[ACP] + L-alanine + H(+) = (8S)-8-amino-7-oxononanoate + holo-[ACP] + CO2. It functions in the pathway cofactor biosynthesis; biotin biosynthesis. In terms of biological role, catalyzes the decarboxylative condensation of pimeloyl-[acyl-carrier protein] and L-alanine to produce 8-amino-7-oxononanoate (AON), [acyl-carrier protein], and carbon dioxide. The sequence is that of 8-amino-7-oxononanoate synthase from Mycolicibacterium paratuberculosis (strain ATCC BAA-968 / K-10) (Mycobacterium paratuberculosis).